We begin with the raw amino-acid sequence, 389 residues long: Na(+)/H(+) antiporter NhaA (389 aa).

A run of 10 helical transmembrane segments spans residues isoleucine 8–tryptophan 28, isoleucine 48–isoleucine 68, methionine 91–isoleucine 111, glycine 119–phenylalanine 139, asparagine 173–leucine 193, alanine 214–leucine 234, tryptophan 262–phenylalanine 282, leucine 288–glycine 308, leucine 327–valine 347, and glycine 361–isoleucine 381.

This sequence belongs to the NhaA Na(+)/H(+) (TC 2.A.33) antiporter family.

It localises to the cell membrane. The enzyme catalyses Na(+)(in) + 2 H(+)(out) = Na(+)(out) + 2 H(+)(in). Na(+)/H(+) antiporter that extrudes sodium in exchange for external protons. The sequence is that of Na(+)/H(+) antiporter NhaA from Desulfitobacterium hafniense (strain DSM 10664 / DCB-2).